The primary structure comprises 240 residues: Uridylate kinase (240 aa).

13 to 16 (KASG) serves as a coordination point for ATP. The segment at 21–26 (GSQGFG) is involved in allosteric activation by GTP. Gly-55 contacts UMP. ATP contacts are provided by Gly-56 and Arg-60. Residues Asp-75 and 136–143 (TGNPFFTT) contribute to the UMP site. Residues Thr-163, Gln-164, Tyr-169, and Asp-172 each coordinate ATP.

Belongs to the UMP kinase family. As to quaternary structure, homohexamer.

Its subcellular location is the cytoplasm. It carries out the reaction UMP + ATP = UDP + ADP. It participates in pyrimidine metabolism; CTP biosynthesis via de novo pathway; UDP from UMP (UMPK route): step 1/1. With respect to regulation, allosterically activated by GTP. Inhibited by UTP. Functionally, catalyzes the reversible phosphorylation of UMP to UDP. This Brucella anthropi (strain ATCC 49188 / DSM 6882 / CCUG 24695 / JCM 21032 / LMG 3331 / NBRC 15819 / NCTC 12168 / Alc 37) (Ochrobactrum anthropi) protein is Uridylate kinase.